Here is a 404-residue protein sequence, read N- to C-terminus: LL-diaminopimelate aminotransferase (404 aa).

Substrate-binding residues include Tyr-15 and Gly-42. Pyridoxal 5'-phosphate is bound by residues Tyr-72, 108-109 (AK), Tyr-132, Asn-188, Tyr-219, and 247-249 (SFS). Residues Lys-109, Tyr-132, and Asn-188 each coordinate substrate. Lys-250 carries the post-translational modification N6-(pyridoxal phosphate)lysine. Pyridoxal 5'-phosphate is bound by residues Arg-258 and Asn-288. Positions 288 and 384 each coordinate substrate.

It belongs to the class-I pyridoxal-phosphate-dependent aminotransferase family. LL-diaminopimelate aminotransferase subfamily. As to quaternary structure, homodimer. It depends on pyridoxal 5'-phosphate as a cofactor.

It carries out the reaction (2S,6S)-2,6-diaminopimelate + 2-oxoglutarate = (S)-2,3,4,5-tetrahydrodipicolinate + L-glutamate + H2O + H(+). The protein operates within amino-acid biosynthesis; L-lysine biosynthesis via DAP pathway; LL-2,6-diaminopimelate from (S)-tetrahydrodipicolinate (aminotransferase route): step 1/1. In terms of biological role, involved in the synthesis of meso-diaminopimelate (m-DAP or DL-DAP), required for both lysine and peptidoglycan biosynthesis. Catalyzes the direct conversion of tetrahydrodipicolinate to LL-diaminopimelate. This chain is LL-diaminopimelate aminotransferase, found in Lachnospira eligens (strain ATCC 27750 / DSM 3376 / VPI C15-48 / C15-B4) (Eubacterium eligens).